The primary structure comprises 310 residues: 2-ketogluconate reductase (310 aa).

NADP(+) contacts are provided by residues 151–152 (HI) and 227–229 (IAR). Catalysis depends on residues R229 and E258. Residue H276 is the Proton donor of the active site.

The protein belongs to the D-isomer specific 2-hydroxyacid dehydrogenase family. In terms of assembly, homohexamer.

It catalyses the reaction D-gluconate + NADP(+) = 2-dehydro-D-gluconate + NADPH + H(+). Catalyzes the reduction of 2-keto-D-gluconate to gluconate. Can also catalyze the reduction of 2-keto-L-gulonate. Can use both NADH and NADPH efficiently, with a slight preference for NADPH. The protein is 2-ketogluconate reductase of Gluconobacter oxydans (strain 621H) (Gluconobacter suboxydans).